A 358-amino-acid polypeptide reads, in one-letter code: Uroporphyrinogen decarboxylase (358 aa).

Residues 27-31 (RQAGR), D77, Y154, S209, and H330 each bind substrate.

This sequence belongs to the uroporphyrinogen decarboxylase family. In terms of assembly, homodimer.

It is found in the cytoplasm. The catalysed reaction is uroporphyrinogen III + 4 H(+) = coproporphyrinogen III + 4 CO2. It functions in the pathway porphyrin-containing compound metabolism; protoporphyrin-IX biosynthesis; coproporphyrinogen-III from 5-aminolevulinate: step 4/4. Its function is as follows. Catalyzes the decarboxylation of four acetate groups of uroporphyrinogen-III to yield coproporphyrinogen-III. This chain is Uroporphyrinogen decarboxylase, found in Acinetobacter baylyi (strain ATCC 33305 / BD413 / ADP1).